The following is a 64-amino-acid chain: Large ribosomal subunit protein bL35 (64 aa).

The protein belongs to the bacterial ribosomal protein bL35 family.

In Aliivibrio fischeri (strain ATCC 700601 / ES114) (Vibrio fischeri), this protein is Large ribosomal subunit protein bL35.